Consider the following 271-residue polypeptide: Aliphatic sulfonates import ATP-binding protein SsuB (271 aa).

Positions 13–234 (ITLESIGKRY…RKGSAKLAAL (222 aa)) constitute an ABC transporter domain. An ATP-binding site is contributed by 45–52 (GRSGCGKS). Positions 250–271 (EASRQGIKASRQGTATSRRVAN) are disordered. Positions 260–271 (RQGTATSRRVAN) are enriched in polar residues.

The protein belongs to the ABC transporter superfamily. Aliphatic sulfonates importer (TC 3.A.1.17.2) family. In terms of assembly, the complex is composed of two ATP-binding proteins (SsuB), two transmembrane proteins (SsuC) and a solute-binding protein (SsuA).

The protein localises to the cell inner membrane. The enzyme catalyses ATP + H2O + aliphatic sulfonate-[sulfonate-binding protein]Side 1 = ADP + phosphate + aliphatic sulfonateSide 2 + [sulfonate-binding protein]Side 1.. Functionally, part of the ABC transporter complex SsuABC involved in aliphatic sulfonates import. Responsible for energy coupling to the transport system. This Yersinia pestis bv. Antiqua (strain Antiqua) protein is Aliphatic sulfonates import ATP-binding protein SsuB.